The chain runs to 101 residues: Acylphosphatase (101 aa).

Residues 12 to 98 form the Acylphosphatase-like domain; sequence RAHVFVTGRV…EGLRGFEVKR (87 aa). Catalysis depends on residues R27 and N45.

It belongs to the acylphosphatase family.

It catalyses the reaction an acyl phosphate + H2O = a carboxylate + phosphate + H(+). This chain is Acylphosphatase (acyP), found in Nostoc sp. (strain PCC 7120 / SAG 25.82 / UTEX 2576).